The primary structure comprises 304 residues: Glycine--tRNA ligase alpha subunit (304 aa).

This sequence belongs to the class-II aminoacyl-tRNA synthetase family. As to quaternary structure, tetramer of two alpha and two beta subunits.

The protein localises to the cytoplasm. The enzyme catalyses tRNA(Gly) + glycine + ATP = glycyl-tRNA(Gly) + AMP + diphosphate. This Photorhabdus laumondii subsp. laumondii (strain DSM 15139 / CIP 105565 / TT01) (Photorhabdus luminescens subsp. laumondii) protein is Glycine--tRNA ligase alpha subunit.